Reading from the N-terminus, the 161-residue chain is Cyclic pyranopterin monophosphate synthase (161 aa).

Substrate is bound by residues 78 to 80 (MCH) and 116 to 117 (ME). The active site involves Asp-131.

The protein belongs to the MoaC family. As to quaternary structure, homohexamer; trimer of dimers.

It carries out the reaction (8S)-3',8-cyclo-7,8-dihydroguanosine 5'-triphosphate = cyclic pyranopterin phosphate + diphosphate. Its pathway is cofactor biosynthesis; molybdopterin biosynthesis. Its function is as follows. Catalyzes the conversion of (8S)-3',8-cyclo-7,8-dihydroguanosine 5'-triphosphate to cyclic pyranopterin monophosphate (cPMP). This Nitratidesulfovibrio vulgaris (strain ATCC 29579 / DSM 644 / CCUG 34227 / NCIMB 8303 / VKM B-1760 / Hildenborough) (Desulfovibrio vulgaris) protein is Cyclic pyranopterin monophosphate synthase.